The following is a 128-amino-acid chain: Large ribosomal subunit protein bL21 (128 aa).

The tract at residues 104 to 128 (GKSPSVGPRPKRVKAEPAPAADAAE) is disordered. The span at 119–128 (EPAPAADAAE) shows a compositional bias: low complexity.

Belongs to the bacterial ribosomal protein bL21 family. Part of the 50S ribosomal subunit. Contacts protein L20.

This protein binds to 23S rRNA in the presence of protein L20. This Rhodopseudomonas palustris (strain HaA2) protein is Large ribosomal subunit protein bL21.